A 198-amino-acid polypeptide reads, in one-letter code: tRNA (pseudouridine(54)-N(1))-methyltransferase (198 aa).

Residues L130, G153, 176–181, and C186 contribute to the S-adenosyl-L-methionine site; that span reads LSPLEL.

It belongs to the methyltransferase superfamily. TrmY family. Homodimer.

It is found in the cytoplasm. It carries out the reaction pseudouridine(54) in tRNA + S-adenosyl-L-methionine = N(1)-methylpseudouridine(54) in tRNA + S-adenosyl-L-homocysteine + H(+). In terms of biological role, specifically catalyzes the N1-methylation of pseudouridine at position 54 (Psi54) in tRNAs. In Methanococcus vannielii (strain ATCC 35089 / DSM 1224 / JCM 13029 / OCM 148 / SB), this protein is tRNA (pseudouridine(54)-N(1))-methyltransferase.